A 134-amino-acid chain; its full sequence is Transcription antitermination protein NusB (134 aa).

This sequence belongs to the NusB family.

Functionally, involved in transcription antitermination. Required for transcription of ribosomal RNA (rRNA) genes. Binds specifically to the boxA antiterminator sequence of the ribosomal RNA (rrn) operons. In Shewanella sediminis (strain HAW-EB3), this protein is Transcription antitermination protein NusB.